Consider the following 140-residue polypeptide: uncharacterized protein (140 aa).

Residues Ile-26 to Leu-80 enclose the HTH cro/C1-type domain. The segment at residues Met-37–Arg-56 is a DNA-binding region (H-T-H motif).

This is an uncharacterized protein from Mycobacterium tuberculosis (strain ATCC 25618 / H37Rv).